Reading from the N-terminus, the 194-residue chain is Peptidyl-tRNA hydrolase (194 aa).

Residue tyrosine 16 participates in tRNA binding. Histidine 21 acts as the Proton acceptor in catalysis. Phenylalanine 67, asparagine 69, and asparagine 115 together coordinate tRNA.

This sequence belongs to the PTH family. Monomer.

It localises to the cytoplasm. The catalysed reaction is an N-acyl-L-alpha-aminoacyl-tRNA + H2O = an N-acyl-L-amino acid + a tRNA + H(+). Functionally, hydrolyzes ribosome-free peptidyl-tRNAs (with 1 or more amino acids incorporated), which drop off the ribosome during protein synthesis, or as a result of ribosome stalling. In terms of biological role, catalyzes the release of premature peptidyl moieties from peptidyl-tRNA molecules trapped in stalled 50S ribosomal subunits, and thus maintains levels of free tRNAs and 50S ribosomes. The protein is Peptidyl-tRNA hydrolase of Salmonella paratyphi B (strain ATCC BAA-1250 / SPB7).